The following is a 158-amino-acid chain: Protein Smg homolog (158 aa).

This sequence belongs to the Smg family.

The chain is Protein Smg homolog from Pseudoalteromonas atlantica (strain T6c / ATCC BAA-1087).